Reading from the N-terminus, the 231-residue chain is 7-cyano-7-deazaguanine synthase (231 aa).

8–18 (FSGGQDSTTCL) contacts ATP. Zn(2+) contacts are provided by Cys-188, Cys-197, Cys-200, and Cys-203.

This sequence belongs to the QueC family. Zn(2+) serves as cofactor.

The catalysed reaction is 7-carboxy-7-deazaguanine + NH4(+) + ATP = 7-cyano-7-deazaguanine + ADP + phosphate + H2O + H(+). It participates in purine metabolism; 7-cyano-7-deazaguanine biosynthesis. In terms of biological role, catalyzes the ATP-dependent conversion of 7-carboxy-7-deazaguanine (CDG) to 7-cyano-7-deazaguanine (preQ(0)). In Citrobacter koseri (strain ATCC BAA-895 / CDC 4225-83 / SGSC4696), this protein is 7-cyano-7-deazaguanine synthase.